The following is a 402-amino-acid chain: Dual-specificity RNA methyltransferase RlmN (402 aa).

Catalysis depends on glutamate 124, which acts as the Proton acceptor. In terms of domain architecture, Radical SAM core spans 130 to 370 (DADRGTLCVS…APVRTPRGRD (241 aa)). An intrachain disulfide couples cysteine 137 to cysteine 375. [4Fe-4S] cluster is bound by residues cysteine 144, cysteine 148, and cysteine 151. S-adenosyl-L-methionine contacts are provided by residues 199 to 200 (GE), serine 231, 253 to 255 (SLH), and asparagine 332. Cysteine 375 acts as the S-methylcysteine intermediate in catalysis.

The protein belongs to the radical SAM superfamily. RlmN family. [4Fe-4S] cluster serves as cofactor.

Its subcellular location is the cytoplasm. It catalyses the reaction adenosine(2503) in 23S rRNA + 2 reduced [2Fe-2S]-[ferredoxin] + 2 S-adenosyl-L-methionine = 2-methyladenosine(2503) in 23S rRNA + 5'-deoxyadenosine + L-methionine + 2 oxidized [2Fe-2S]-[ferredoxin] + S-adenosyl-L-homocysteine. It carries out the reaction adenosine(37) in tRNA + 2 reduced [2Fe-2S]-[ferredoxin] + 2 S-adenosyl-L-methionine = 2-methyladenosine(37) in tRNA + 5'-deoxyadenosine + L-methionine + 2 oxidized [2Fe-2S]-[ferredoxin] + S-adenosyl-L-homocysteine. Functionally, specifically methylates position 2 of adenine 2503 in 23S rRNA and position 2 of adenine 37 in tRNAs. m2A2503 modification seems to play a crucial role in the proofreading step occurring at the peptidyl transferase center and thus would serve to optimize ribosomal fidelity. This Rhizorhabdus wittichii (strain DSM 6014 / CCUG 31198 / JCM 15750 / NBRC 105917 / EY 4224 / RW1) (Sphingomonas wittichii) protein is Dual-specificity RNA methyltransferase RlmN.